A 38-amino-acid polypeptide reads, in one-letter code: Cytochrome b6-f complex subunit 5 (38 aa).

The chain crosses the membrane as a helical span at residues 5–25 (LLLGIVLGLIPVTLAGLFVAA).

It belongs to the PetG family. The 4 large subunits of the cytochrome b6-f complex are cytochrome b6, subunit IV (17 kDa polypeptide, PetD), cytochrome f and the Rieske protein, while the 4 small subunits are PetG, PetL, PetM and PetN. The complex functions as a dimer.

It is found in the cellular thylakoid membrane. In terms of biological role, component of the cytochrome b6-f complex, which mediates electron transfer between photosystem II (PSII) and photosystem I (PSI), cyclic electron flow around PSI, and state transitions. PetG is required for either the stability or assembly of the cytochrome b6-f complex. This is Cytochrome b6-f complex subunit 5 from Picosynechococcus sp. (strain ATCC 27264 / PCC 7002 / PR-6) (Agmenellum quadruplicatum).